Reading from the N-terminus, the 280-residue chain is 3-deoxy-manno-octulosonate cytidylyltransferase (280 aa).

It belongs to the KdsB family.

Its subcellular location is the cytoplasm. It carries out the reaction 3-deoxy-alpha-D-manno-oct-2-ulosonate + CTP = CMP-3-deoxy-beta-D-manno-octulosonate + diphosphate. It participates in nucleotide-sugar biosynthesis; CMP-3-deoxy-D-manno-octulosonate biosynthesis; CMP-3-deoxy-D-manno-octulosonate from 3-deoxy-D-manno-octulosonate and CTP: step 1/1. It functions in the pathway bacterial outer membrane biogenesis; lipopolysaccharide biosynthesis. Functionally, activates KDO (a required 8-carbon sugar) for incorporation into bacterial lipopolysaccharide in Gram-negative bacteria. The polypeptide is 3-deoxy-manno-octulosonate cytidylyltransferase (Colwellia psychrerythraea (strain 34H / ATCC BAA-681) (Vibrio psychroerythus)).